A 258-amino-acid polypeptide reads, in one-letter code: Ditrans,polycis-undecaprenyl-diphosphate synthase ((2E,6E)-farnesyl-diphosphate specific) (258 aa).

The active site involves aspartate 24. Mg(2+) is bound at residue aspartate 24. Substrate-binding positions include 25-28, tryptophan 29, arginine 37, histidine 41, and 69-71; these read GNGR and SSE. Catalysis depends on asparagine 72, which acts as the Proton acceptor. Substrate-binding positions include tryptophan 73, arginine 75, arginine 192, and 198–200; that span reads RIS. Glutamate 211 provides a ligand contact to Mg(2+).

The protein belongs to the UPP synthase family. As to quaternary structure, homodimer. Mg(2+) is required as a cofactor.

The enzyme catalyses 8 isopentenyl diphosphate + (2E,6E)-farnesyl diphosphate = di-trans,octa-cis-undecaprenyl diphosphate + 8 diphosphate. Functionally, catalyzes the sequential condensation of isopentenyl diphosphate (IPP) with (2E,6E)-farnesyl diphosphate (E,E-FPP) to yield (2Z,6Z,10Z,14Z,18Z,22Z,26Z,30Z,34E,38E)-undecaprenyl diphosphate (di-trans,octa-cis-UPP). UPP is the precursor of glycosyl carrier lipid in the biosynthesis of bacterial cell wall polysaccharide components such as peptidoglycan and lipopolysaccharide. The chain is Ditrans,polycis-undecaprenyl-diphosphate synthase ((2E,6E)-farnesyl-diphosphate specific) from Xanthomonas oryzae pv. oryzae (strain KACC10331 / KXO85).